The primary structure comprises 490 residues: Sushi domain-containing protein 4 (490 aa).

Residues 1–20 (MYHGMNPSNGDGFLEQQLQQ) form a disordered region. The signal sequence occupies residues 1–41 (MYHGMNPSNGDGFLEQQLQQQQPQSPQRLLAVILWFQLALC). Over 42-319 (FGPAQLTGGF…PSTHETLLTT (278 aa)) the chain is Extracellular. Sushi domains follow at residues 55–119 (NVCA…VCIQ), 120–179 (EDCR…ICQG), 178–239 (QGCL…RCLA), and 241–304 (EVCP…YCIK). Disulfide bonds link C57-C99, C85-C117, C122-C165, C147-C177, C180-C224, C210-C237, C243-C289, and C274-C302. N-linked (GlcNAc...) asparagine glycans are attached at residues N104 and N134. The N-linked (GlcNAc...) asparagine glycan is linked to N192. Residues 320-340 (WKIVAFTATSVLLVLLLVILA) form a helical membrane-spanning segment. The Cytoplasmic segment spans residues 341–490 (RMFQTKFKAH…DEIPLMEEDP (150 aa)). A disordered region spans residues 394–490 (YPASVGQGCP…DEIPLMEEDP (97 aa)). 2 stretches are compositionally biased toward polar residues: residues 430–444 (CDST…QSLY) and 461–475 (DTIS…STSP). The segment covering 479 to 490 (IADEIPLMEEDP) has biased composition (acidic residues).

High expression in brain and eye, with weaker expression in spinal cord and testis. Detected in white matter of brain and in the outer segments of photoreceptors.

Its subcellular location is the membrane. In terms of biological role, acts as a complement inhibitor by disrupting the formation of the classical C3 convertase. Isoform 3 inhibits the classical complement pathway, while membrane-bound isoform 1 inhibits deposition of C3b via both the classical and alternative complement pathways. This chain is Sushi domain-containing protein 4 (Susd4), found in Mus musculus (Mouse).